We begin with the raw amino-acid sequence, 390 residues long: Chorismate synthase 2 (390 aa).

NADP(+) contacts are provided by Arg-39 and Arg-45. FMN contacts are provided by residues Arg-132 to Ser-134, Asn-253 to Ala-254, Gly-298, Lys-313 to Thr-317, and Arg-339.

This sequence belongs to the chorismate synthase family. As to quaternary structure, homotetramer. FMNH2 serves as cofactor.

The catalysed reaction is 5-O-(1-carboxyvinyl)-3-phosphoshikimate = chorismate + phosphate. It participates in metabolic intermediate biosynthesis; chorismate biosynthesis; chorismate from D-erythrose 4-phosphate and phosphoenolpyruvate: step 7/7. Catalyzes the anti-1,4-elimination of the C-3 phosphate and the C-6 proR hydrogen from 5-enolpyruvylshikimate-3-phosphate (EPSP) to yield chorismate, which is the branch point compound that serves as the starting substrate for the three terminal pathways of aromatic amino acid biosynthesis. This reaction introduces a second double bond into the aromatic ring system. This Bacillus cereus (strain ZK / E33L) protein is Chorismate synthase 2.